We begin with the raw amino-acid sequence, 759 residues long: Protein transport protein sec23-1 (759 aa).

Zn(2+) is bound by residues Cys56, Cys60, Cys79, and Cys82.

It belongs to the SEC23/SEC24 family. SEC23 subfamily. The COPII coat is composed of at least 5 proteins: the sec23/24 complex, the sec13/31 complex, and the protein sar1.

It is found in the cytoplasm. The protein resides in the cytoplasmic vesicle. The protein localises to the COPII-coated vesicle membrane. It localises to the endoplasmic reticulum membrane. Its subcellular location is the golgi apparatus membrane. In terms of biological role, component of the coat protein complex II (COPII) which promotes the formation of transport vesicles from the endoplasmic reticulum (ER). The coat has two main functions, the physical deformation of the endoplasmic reticulum membrane into vesicles and the selection of cargo molecules. The polypeptide is Protein transport protein sec23-1 (sec231) (Schizosaccharomyces pombe (strain 972 / ATCC 24843) (Fission yeast)).